Here is an 801-residue protein sequence, read N- to C-terminus: K(+)-insensitive pyrophosphate-energized proton pump (801 aa).

Helical transmembrane passes span 27 to 47 (VIVM…GILV), 81 to 101 (TLGV…ADDW), 109 to 129 (VFFL…MWLA), 170 to 190 (GVVG…VVLV), and 201 to 221 (GFGL…GIFT). K222 is a binding site for substrate. Residues D225, D229, N252, and D255 each coordinate Mg(2+). Helical transmembrane passes span 261–281 (AGMA…ALIL), 292–312 (AFPL…IFAV), 328–348 (GFFV…YVYL), 372–392 (ILAM…QQLT), 406–426 (IGKS…SVGL), 429–449 (AVYT…LGGT), and 453–473 (LALF…GVIV). D483 is a binding site for Mg(2+). A run of 4 helical transmembrane segments spans residues 515–535 (AITK…LFGS), 571–591 (VGLI…INAV), 641–661 (LLAV…ALGA), and 663–683 (LAGA…SGGA). Residues D685, D711, and D715 each coordinate Ca(2+). K718 is a substrate binding site. 2 helical membrane-spanning segments follow: residues 724–744 (AINP…PAVV) and 754–774 (LGVR…AVYI).

The protein belongs to the H(+)-translocating pyrophosphatase (TC 3.A.10) family. K(+)-insensitive subfamily. Homodimer. Requires Mg(2+) as cofactor.

It localises to the cell membrane. It catalyses the reaction diphosphate + H2O + H(+)(in) = 2 phosphate + 2 H(+)(out). Its function is as follows. Proton pump that utilizes the energy of pyrophosphate hydrolysis as the driving force for proton movement across the membrane. Generates a proton motive force. This chain is K(+)-insensitive pyrophosphate-energized proton pump, found in Streptomyces avermitilis (strain ATCC 31267 / DSM 46492 / JCM 5070 / NBRC 14893 / NCIMB 12804 / NRRL 8165 / MA-4680).